The chain runs to 497 residues: 3-octaprenyl-4-hydroxybenzoate carboxy-lyase (497 aa).

Asparagine 175 serves as a coordination point for Mn(2+). Prenylated FMN contacts are provided by residues 178-180 (IYR), 192-194 (RWL), and 197-198 (RG). Glutamate 241 provides a ligand contact to Mn(2+). Aspartate 290 acts as the Proton donor in catalysis.

This sequence belongs to the UbiD family. Homohexamer. The cofactor is prenylated FMN. It depends on Mn(2+) as a cofactor.

It localises to the cell membrane. The enzyme catalyses a 4-hydroxy-3-(all-trans-polyprenyl)benzoate + H(+) = a 2-(all-trans-polyprenyl)phenol + CO2. Its pathway is cofactor biosynthesis; ubiquinone biosynthesis. Catalyzes the decarboxylation of 3-octaprenyl-4-hydroxy benzoate to 2-octaprenylphenol, an intermediate step in ubiquinone biosynthesis. In Shigella boydii serotype 4 (strain Sb227), this protein is 3-octaprenyl-4-hydroxybenzoate carboxy-lyase.